The sequence spans 322 residues: HPr kinase/phosphorylase (322 aa).

Active-site residues include His-146 and Lys-167. Residue 161–168 (GDSGLGKS) participates in ATP binding. Mg(2+) is bound at residue Ser-168. Asp-185 functions as the Proton acceptor; for phosphorylation activity. Proton donor; for dephosphorylation activity in the catalytic mechanism. Residues 209–218 (LEVRGLGLLD) are important for the catalytic mechanism of both phosphorylation and dephosphorylation. Glu-210 lines the Mg(2+) pocket. Residue Arg-250 is part of the active site. Residues 271 to 276 (QVAAGR) are important for the catalytic mechanism of dephosphorylation.

The protein belongs to the HPrK/P family. In terms of assembly, homohexamer. The cofactor is Mg(2+).

The enzyme catalyses [HPr protein]-L-serine + ATP = [HPr protein]-O-phospho-L-serine + ADP + H(+). The catalysed reaction is [HPr protein]-O-phospho-L-serine + phosphate + H(+) = [HPr protein]-L-serine + diphosphate. Functionally, catalyzes the ATP- as well as the pyrophosphate-dependent phosphorylation of a specific serine residue in HPr, a phosphocarrier protein of the phosphoenolpyruvate-dependent sugar phosphotransferase system (PTS). HprK/P also catalyzes the pyrophosphate-producing, inorganic phosphate-dependent dephosphorylation (phosphorolysis) of seryl-phosphorylated HPr (P-Ser-HPr). The sequence is that of HPr kinase/phosphorylase from Burkholderia ambifaria (strain ATCC BAA-244 / DSM 16087 / CCUG 44356 / LMG 19182 / AMMD) (Burkholderia cepacia (strain AMMD)).